Reading from the N-terminus, the 283-residue chain is Ribose-phosphate pyrophosphokinase (283 aa).

ATP is bound by residues 34 to 36 (DGE) and 89 to 90 (RQ). Mg(2+) contacts are provided by histidine 120 and aspartate 159. Lysine 182 is an active-site residue. D-ribose 5-phosphate is bound by residues arginine 184 and aspartate 208.

Belongs to the ribose-phosphate pyrophosphokinase family. Class III (archaeal) subfamily. Mg(2+) is required as a cofactor.

Its subcellular location is the cytoplasm. It carries out the reaction D-ribose 5-phosphate + ATP = 5-phospho-alpha-D-ribose 1-diphosphate + AMP + H(+). It participates in metabolic intermediate biosynthesis; 5-phospho-alpha-D-ribose 1-diphosphate biosynthesis; 5-phospho-alpha-D-ribose 1-diphosphate from D-ribose 5-phosphate (route I): step 1/1. Functionally, involved in the biosynthesis of the central metabolite phospho-alpha-D-ribosyl-1-pyrophosphate (PRPP) via the transfer of pyrophosphoryl group from ATP to 1-hydroxyl of ribose-5-phosphate (Rib-5-P). This chain is Ribose-phosphate pyrophosphokinase, found in Methanosarcina acetivorans (strain ATCC 35395 / DSM 2834 / JCM 12185 / C2A).